We begin with the raw amino-acid sequence, 305 residues long: tRNA dimethylallyltransferase (305 aa).

An ATP-binding site is contributed by 9 to 16; it reads GPTASGKS. Residue 11–16 participates in substrate binding; the sequence is TASGKS. Residues 34–37 form an interaction with substrate tRNA region; sequence DSKQ.

It belongs to the IPP transferase family. Monomer. Requires Mg(2+) as cofactor.

It carries out the reaction adenosine(37) in tRNA + dimethylallyl diphosphate = N(6)-dimethylallyladenosine(37) in tRNA + diphosphate. Catalyzes the transfer of a dimethylallyl group onto the adenine at position 37 in tRNAs that read codons beginning with uridine, leading to the formation of N6-(dimethylallyl)adenosine (i(6)A). In Anaplasma marginale (strain Florida), this protein is tRNA dimethylallyltransferase.